The primary structure comprises 883 residues: Alanine--tRNA ligase (883 aa).

His563, His567, Cys677, and His681 together coordinate Zn(2+).

Belongs to the class-II aminoacyl-tRNA synthetase family. The cofactor is Zn(2+).

The protein localises to the cytoplasm. It catalyses the reaction tRNA(Ala) + L-alanine + ATP = L-alanyl-tRNA(Ala) + AMP + diphosphate. Functionally, catalyzes the attachment of alanine to tRNA(Ala) in a two-step reaction: alanine is first activated by ATP to form Ala-AMP and then transferred to the acceptor end of tRNA(Ala). Also edits incorrectly charged Ser-tRNA(Ala) and Gly-tRNA(Ala) via its editing domain. This chain is Alanine--tRNA ligase, found in Cereibacter sphaeroides (strain ATCC 17025 / ATH 2.4.3) (Rhodobacter sphaeroides).